The chain runs to 239 residues: N-glycosylase/DNA lyase (239 aa).

Q24, S51, and W62 together coordinate 8-oxoguanine. The segment at 118 to 182 (ERYYEDMTLL…EDVRIIKLTR (65 aa)) is helix-hairpin-helix. The active-site Schiff-base intermediate with DNA is K142. Positions 146 and 172 each coordinate 8-oxoguanine. Residue D174 is part of the active site. 2 residues coordinate 8-oxoguanine: D208 and W212.

This sequence belongs to the archaeal N-glycosylase/DNA lyase (AGOG) family.

It catalyses the reaction 2'-deoxyribonucleotide-(2'-deoxyribose 5'-phosphate)-2'-deoxyribonucleotide-DNA = a 3'-end 2'-deoxyribonucleotide-(2,3-dehydro-2,3-deoxyribose 5'-phosphate)-DNA + a 5'-end 5'-phospho-2'-deoxyribonucleoside-DNA + H(+). In terms of biological role, DNA repair enzyme that is part of the base excision repair (BER) pathway; protects from oxidative damage by removing the major product of DNA oxidation, 8-oxoguanine (GO), from single- and double-stranded DNA substrates. The polypeptide is N-glycosylase/DNA lyase (Pyrococcus horikoshii (strain ATCC 700860 / DSM 12428 / JCM 9974 / NBRC 100139 / OT-3)).